A 45-amino-acid chain; its full sequence is C-phycocyanin beta subunit (45 aa).

It belongs to the phycobiliprotein family. In terms of assembly, heterodimer of an alpha and a beta subunit. The hererodimer further assembles into trimers and the trimers into hexamers. Contains two covalently linked bilin chromophores.

Its subcellular location is the cellular thylakoid membrane. Functionally, light-harvesting photosynthetic bile pigment-protein from the phycobiliprotein complex (phycobilisome, PBS). Phycocyanin is the major phycobiliprotein in the PBS rod. The polypeptide is C-phycocyanin beta subunit (cpcB) (Limnospira fusiformis (Arthrospira fusiformis)).